A 453-amino-acid polypeptide reads, in one-letter code: Ribosomal protein uS12 methylthiotransferase RimO (453 aa).

An MTTase N-terminal domain is found at 5–120 (PKVGFVSLGC…VMQAVHSHLP (116 aa)). Residues cysteine 14, cysteine 50, cysteine 79, cysteine 151, cysteine 155, and cysteine 158 each contribute to the [4Fe-4S] cluster site. The Radical SAM core domain occupies 137-382 (LTPRHYAYLK…MEVAEEVSAR (246 aa)). A TRAM domain is found at 385–453 (ARKVGKTLKV…ADGHDLWGEV (69 aa)).

The protein belongs to the methylthiotransferase family. RimO subfamily. The cofactor is [4Fe-4S] cluster.

Its subcellular location is the cytoplasm. The catalysed reaction is L-aspartate(89)-[ribosomal protein uS12]-hydrogen + (sulfur carrier)-SH + AH2 + 2 S-adenosyl-L-methionine = 3-methylsulfanyl-L-aspartate(89)-[ribosomal protein uS12]-hydrogen + (sulfur carrier)-H + 5'-deoxyadenosine + L-methionine + A + S-adenosyl-L-homocysteine + 2 H(+). Its function is as follows. Catalyzes the methylthiolation of an aspartic acid residue of ribosomal protein uS12. This is Ribosomal protein uS12 methylthiotransferase RimO from Burkholderia multivorans (strain ATCC 17616 / 249).